The primary structure comprises 153 residues: DNA gyrase inhibitor 1 (153 aa).

This sequence belongs to the DNA gyrase inhibitor family. In terms of assembly, interacts with DNA gyrase.

The protein localises to the cytoplasm. Functionally, inhibits the supercoiling activity of DNA gyrase. Acts by inhibiting DNA gyrase at an early step, prior to (or at the step of) binding of DNA by the gyrase. It protects cells against toxins that target DNA gyrase, by inhibiting activity of these toxins and reducing the formation of lethal double-strand breaks in the cell. In Dickeya dadantii (strain 3937) (Erwinia chrysanthemi (strain 3937)), this protein is DNA gyrase inhibitor 1.